A 199-amino-acid chain; its full sequence is NAD(P)H dehydrogenase (quinone) (199 aa).

In terms of domain architecture, Flavodoxin-like spans 4–190 (VLVLYYSAYG…EAAKYQGAHV (187 aa)). Residues 10–15 (SAYGHI) and 78–80 (TRF) contribute to the FMN site. Tyrosine 12 is a binding site for NAD(+). Tryptophan 98 contacts substrate. FMN contacts are provided by residues 113–119 (SSATQHG) and histidine 134.

It belongs to the WrbA family. The cofactor is FMN.

It carries out the reaction a quinone + NADH + H(+) = a quinol + NAD(+). The catalysed reaction is a quinone + NADPH + H(+) = a quinol + NADP(+). This is NAD(P)H dehydrogenase (quinone) from Rhizobium rhizogenes (strain K84 / ATCC BAA-868) (Agrobacterium radiobacter).